The following is a 35-amino-acid chain: Kappa-theraphotoxin-Tb1b (35 aa).

Cystine bridges form between Cys3–Cys18, Cys10–Cys23, and Cys17–Cys30.

This sequence belongs to the neurotoxin 10 (Hwtx-1) family. 58 subfamily. In terms of assembly, monomer. Expressed by the venom gland.

The protein resides in the secreted. Functionally, low-affinity blocker of Kv4.2/KCND2 voltage-gated potassium channels. Is presumed to shift the voltage-dependence of channel activation to more depolarized potentials and to bind to the S3-S4 linker region of the voltage sensor domain. This is Kappa-theraphotoxin-Tb1b from Theraphosa blondi (Goliath birdeating spider).